The sequence spans 130 residues: ATP synthase epsilon chain (130 aa).

This sequence belongs to the ATPase epsilon chain family. As to quaternary structure, F-type ATPases have 2 components, CF(1) - the catalytic core - and CF(0) - the membrane proton channel. CF(1) has five subunits: alpha(3), beta(3), gamma(1), delta(1), epsilon(1). CF(0) has three main subunits: a, b and c.

The protein resides in the cell inner membrane. Produces ATP from ADP in the presence of a proton gradient across the membrane. This is ATP synthase epsilon chain (atpC) from Fuscovulum blasticum (Rhodobacter blasticus).